A 246-amino-acid chain; its full sequence is 1-(5-phosphoribosyl)-5-[(5-phosphoribosylamino)methylideneamino] imidazole-4-carboxamide isomerase (246 aa).

The Proton acceptor role is filled by aspartate 8. Catalysis depends on aspartate 131, which acts as the Proton donor.

The protein belongs to the HisA/HisF family.

It localises to the cytoplasm. The catalysed reaction is 1-(5-phospho-beta-D-ribosyl)-5-[(5-phospho-beta-D-ribosylamino)methylideneamino]imidazole-4-carboxamide = 5-[(5-phospho-1-deoxy-D-ribulos-1-ylimino)methylamino]-1-(5-phospho-beta-D-ribosyl)imidazole-4-carboxamide. It functions in the pathway amino-acid biosynthesis; L-histidine biosynthesis; L-histidine from 5-phospho-alpha-D-ribose 1-diphosphate: step 4/9. In Polaromonas sp. (strain JS666 / ATCC BAA-500), this protein is 1-(5-phosphoribosyl)-5-[(5-phosphoribosylamino)methylideneamino] imidazole-4-carboxamide isomerase.